The following is a 570-amino-acid chain: MFS-type transporter pigP (570 aa).

The segment at 14-54 (GMIKKAHPEQTPPDVSHEGDVATEKGDSDGVEQAAPTGPTD) is disordered. Over residues 28–41 (VSHEGDVATEKGDS) the composition is skewed to basic and acidic residues. 7 helical membrane-spanning segments follow: residues 65–85 (VMIM…TSII), 99–119 (LPDV…LVPL), 131–151 (WSFV…GVAT), 162–182 (VAGM…AGCV), 192–212 (GLLM…GGAF), 221–241 (CFYI…FVHI), and 263–283 (LVGF…LQYG). N290 is a glycosylation site (N-linked (GlcNAc...) asparagine). 7 helical membrane passes run 293 to 313 (VVIG…LWEW), 336 to 356 (VVYG…PIYF), 369 to 389 (VYIL…GALV), 392 to 412 (FGYY…GNGL), 425 to 445 (WIGY…MPII), 455 to 475 (LIPV…STFL), and 533 to 553 (VFYL…GMGW).

It belongs to the major facilitator superfamily. TCR/Tet family.

The protein resides in the cell membrane. Functionally, MFS-type transporter; part of the gene cluster that mediates the biosynthesis of azaphilone pigments (MonAzPs), very widely used as food colorant. This Monascus ruber (Mold) protein is MFS-type transporter pigP.